Reading from the N-terminus, the 1254-residue chain is SUN domain-containing ossification factor (1254 aa).

The signal sequence occupies residues 1-29 (MKKHRRALALVSCLFLCSLVWLPSWRVCC). 3 disordered regions span residues 58-88 (KKDEREGPINAESLGKSGSNLPISPKEHKLK), 118-270 (EESS…DIPT), and 282-304 (EKEKSQSMHASSNGGSHATKKVQ). Low complexity predominate over residues 130–145 (VENISSSSTSEITPIS). Positions 165–175 (EQSETDCDVGE) are enriched in acidic residues. N-linked (GlcNAc...) asparagine glycans are attached at residues N202 and N236. Residues 241–253 (LKNESSDYTKPGD) show a composition bias toward basic and acidic residues. The SUN domain occupies 284-453 (EKSQSMHASS…SLIRVFGTSM (170 aa)). Over residues 288-297 (SMHASSNGGS) the composition is skewed to polar residues. N-linked (GlcNAc...) asparagine glycosylation occurs at N524. 3 disordered regions span residues 530-553 (NATATAAPKMPESTPVSTPVPSPE), 583-605 (EEEEEASPSTVTLLGSGEQEDES), and 759-788 (HIPSPVIPQESSVEIDNETEQKSESFSSIE). Positions 540-553 (PESTPVSTPVPSPE) are enriched in low complexity. Residues 909–1009 (NQKESVFMRL…VAELKREVSD (101 aa)) adopt a coiled-coil conformation. N928 and N955 each carry an N-linked (GlcNAc...) asparagine glycan. Residues 1011-1031 (QSYLVISLVLCVVLGLMLCMQ) form a helical membrane-spanning segment. A Phosphoserine modification is found at S1081. A disordered region spans residues 1152-1172 (EVYHSSYKGPPSEGSSETSSQ). Positions 1163-1172 (SEGSSETSSQ) are enriched in low complexity.

In terms of processing, O-glycosylated. O-mannosylated by POMT1 and POMT2 and elongated by POMGNT1. N-glycosylated. As to expression, highly expressed in pancreas and testis and to a lower extent in prostate, ovary, heart, thymus, small intestine and spleen.

The protein localises to the rough endoplasmic reticulum membrane. In terms of biological role, required for bone modeling during late embryogenesis. Regulates type I collagen synthesis in osteoblasts during their postnatal maturation. The polypeptide is SUN domain-containing ossification factor (SUCO) (Homo sapiens (Human)).